The primary structure comprises 265 residues: Orotidine 5'-phosphate decarboxylase (265 aa).

Substrate contacts are provided by residues Asp38, 60–62 (KTH), 91–100 (DRKFADIGNT), Tyr213, and Arg232. The active-site Proton donor is Lys93.

The protein belongs to the OMP decarboxylase family.

The catalysed reaction is orotidine 5'-phosphate + H(+) = UMP + CO2. It participates in pyrimidine metabolism; UMP biosynthesis via de novo pathway; UMP from orotate: step 2/2. In Mucor circinelloides f. lusitanicus (Mucor racemosus var. lusitanicus), this protein is Orotidine 5'-phosphate decarboxylase (pyrG).